The following is a 219-amino-acid chain: Ribose-5-phosphate isomerase A (219 aa).

Residues 28–31 (SGST), 81–84 (DGAD), and 94–97 (KGGG) each bind substrate. The Proton acceptor role is filled by Glu103. Lys121 contacts substrate.

The protein belongs to the ribose 5-phosphate isomerase family. Homodimer.

The enzyme catalyses aldehydo-D-ribose 5-phosphate = D-ribulose 5-phosphate. The protein operates within carbohydrate degradation; pentose phosphate pathway; D-ribose 5-phosphate from D-ribulose 5-phosphate (non-oxidative stage): step 1/1. Functionally, catalyzes the reversible conversion of ribose-5-phosphate to ribulose 5-phosphate. The sequence is that of Ribose-5-phosphate isomerase A from Actinobacillus pleuropneumoniae serotype 3 (strain JL03).